The chain runs to 356 residues: Protein trichome birefringence-like 41 (356 aa).

Residues 12–31 (SALVLSLLLLLLLPLLHEAA) form a helical; Signal-anchor for type II membrane protein membrane-spanning segment. Positions 107 to 109 (GDS) match the GDS motif motif. A DCXHWCLPGXXDXWN motif motif is present at residues 333–347 (DCSHWCLSGVPDTWN).

The protein belongs to the PC-esterase family. TBL subfamily.

The protein localises to the membrane. In terms of biological role, may act as a bridging protein that binds pectin and other cell wall polysaccharides. Probably involved in maintaining esterification of pectins. May be involved in the specific O-acetylation of cell wall polymers. The protein is Protein trichome birefringence-like 41 (TBL41) of Arabidopsis thaliana (Mouse-ear cress).